The following is a 76-amino-acid chain: Conotoxin Cl6.4 (76 aa).

Residues 1-19 form the signal peptide; the sequence is MTLTFLLVVALCMLTTCHT. Positions 20–47 are excised as a propeptide; it reads ENYRDSQKVSPVRSIGKTQFARSLRLSE. 3 cysteine pairs are disulfide-bonded: Cys-50-Cys-66, Cys-57-Cys-70, and Cys-65-Cys-75.

In terms of tissue distribution, expressed by the venom duct.

The protein resides in the secreted. In Californiconus californicus (California cone), this protein is Conotoxin Cl6.4.